The following is a 200-amino-acid chain: NADH-quinone oxidoreductase subunit C (200 aa).

It belongs to the complex I 30 kDa subunit family. NDH-1 is composed of 14 different subunits. Subunits NuoB, C, D, E, F, and G constitute the peripheral sector of the complex.

The protein resides in the cell inner membrane. The catalysed reaction is a quinone + NADH + 5 H(+)(in) = a quinol + NAD(+) + 4 H(+)(out). In terms of biological role, NDH-1 shuttles electrons from NADH, via FMN and iron-sulfur (Fe-S) centers, to quinones in the respiratory chain. The immediate electron acceptor for the enzyme in this species is believed to be ubiquinone. Couples the redox reaction to proton translocation (for every two electrons transferred, four hydrogen ions are translocated across the cytoplasmic membrane), and thus conserves the redox energy in a proton gradient. The chain is NADH-quinone oxidoreductase subunit C from Rhizobium leguminosarum bv. trifolii (strain WSM2304).